We begin with the raw amino-acid sequence, 217 residues long: Hypersensitivity response secretion protein HrcR (217 aa).

A run of 4 helical transmembrane segments spans residues 6 to 26, 52 to 72, 158 to 178, and 190 to 210; these read FASLIVMAVAIALLPFAAMVV, MVLNGIAMIVSCFVMAPVGME, IGFLLYLAFIVIDLVIANLLM, and VAIPFKLLLFVVMDGWSVLIH.

It belongs to the FliP/MopC/SpaP family.

It localises to the cell membrane. Involved in the secretion of PopA, a proteinaceous elicitor of the hypersensitivity response in plants. The protein is Hypersensitivity response secretion protein HrcR (hrcR) of Ralstonia nicotianae (strain ATCC BAA-1114 / GMI1000) (Ralstonia solanacearum).